A 355-amino-acid chain; its full sequence is tRNA N6-adenosine threonylcarbamoyltransferase (355 aa).

2 residues coordinate Fe cation: histidine 110 and histidine 114. Substrate contacts are provided by residues 132 to 136 (LVSGG), aspartate 165, glycine 178, aspartate 182, and asparagine 288. Residue aspartate 316 coordinates Fe cation.

This sequence belongs to the KAE1 / TsaD family. Fe(2+) serves as cofactor.

It localises to the cytoplasm. It carries out the reaction L-threonylcarbamoyladenylate + adenosine(37) in tRNA = N(6)-L-threonylcarbamoyladenosine(37) in tRNA + AMP + H(+). Required for the formation of a threonylcarbamoyl group on adenosine at position 37 (t(6)A37) in tRNAs that read codons beginning with adenine. Is involved in the transfer of the threonylcarbamoyl moiety of threonylcarbamoyl-AMP (TC-AMP) to the N6 group of A37, together with TsaE and TsaB. TsaD likely plays a direct catalytic role in this reaction. This chain is tRNA N6-adenosine threonylcarbamoyltransferase, found in Lawsonia intracellularis (strain PHE/MN1-00).